The chain runs to 29 residues: Cycloviolacin-O21 (29 aa).

The cyclopeptide (Gly-Asn) cross-link spans 1–29; that stretch reads GLPVCGETCVTGSCYTPGCTCSWPVCTRN. Intrachain disulfides connect Cys-5/Cys-19, Cys-9/Cys-21, and Cys-14/Cys-26.

This is a cyclic peptide. In terms of tissue distribution, expressed in leaves, petals, petioles, and runners but not in roots (at protein level).

In terms of biological role, probably participates in a plant defense mechanism. The chain is Cycloviolacin-O21 from Viola odorata (Sweet violet).